The sequence spans 576 residues: Arginine--tRNA ligase (576 aa).

The 'HIGH' region signature appears at 122-132 (PNVAKEMHVGH).

The protein belongs to the class-I aminoacyl-tRNA synthetase family. Monomer.

Its subcellular location is the cytoplasm. It carries out the reaction tRNA(Arg) + L-arginine + ATP = L-arginyl-tRNA(Arg) + AMP + diphosphate. The protein is Arginine--tRNA ligase of Erwinia tasmaniensis (strain DSM 17950 / CFBP 7177 / CIP 109463 / NCPPB 4357 / Et1/99).